Reading from the N-terminus, the 340-residue chain is Cysteinyl leukotriene receptor 1 (340 aa).

Residues 1–31 (MDETGNPTIPPASNNTCYDSIDDFRNQVYST) lie on the Extracellular side of the membrane. Asn-14 is a glycosylation site (N-linked (GlcNAc...) asparagine). Residues 32–52 (LYSMISVVGFFGNGFVLYVLV) form a helical membrane-spanning segment. The Cytoplasmic segment spans residues 53 to 60 (KTYHEKSA). Residues 61 to 81 (FQVYMINLAVADLLCVCTLPL) traverse the membrane as a helical segment. Residues 82–109 (RVAYYVHKGIWLFGDFLCRLSTYALYVN) are Extracellular-facing. An intrachain disulfide couples Cys-99 to Cys-176. A helical membrane pass occupies residues 110-130 (LYCSIFFMTAMSFFRCVAIVF). The Cytoplasmic segment spans residues 131-144 (PVQNISLVTQKKAR). The chain crosses the membrane as a helical span at residues 145–165 (LVCIAIWMFVILTSSPFLMAN). Over 166-196 (TYKDEKNNTKCFEPPQDNQAKNYVLILHYVS) the chain is Extracellular. A glycan (N-linked (GlcNAc...) asparagine) is linked at Asn-172. The chain crosses the membrane as a helical span at residues 197-217 (LFIGFIIPFITIIVCYTMIIF). Topologically, residues 218–233 (TLLKSSMKKNLSSRKR) are cytoplasmic. The chain crosses the membrane as a helical span at residues 234–254 (AIGMIIVVTAAFLVSFMPYHI). At 255–279 (QRTIHLHFLHNKTKPCDSILRMQKS) the chain is on the extracellular side. Asn-265 carries N-linked (GlcNAc...) asparagine glycosylation. A helical transmembrane segment spans residues 280-300 (VVITLSLAASNCCFDPLLYFF). The Cytoplasmic portion of the chain corresponds to 301 to 340 (SGGNFRRRLSTIRKYSLSSMTYIPKKKTSLPQKGKDICKE).

It belongs to the G-protein coupled receptor 1 family.

The protein localises to the cell membrane. Its function is as follows. Receptor for cysteinyl leukotrienes mediating bronchoconstriction of individuals with and without asthma. Stimulation by LTD4 results in the contraction and proliferation of smooth muscle, edema, eosinophil migration and damage to the mucus layer in the lung. This response is mediated via a G-protein that activates a phosphatidylinositol-calcium second messenger system. The polypeptide is Cysteinyl leukotriene receptor 1 (CYSLTR1) (Cavia porcellus (Guinea pig)).